The chain runs to 166 residues: NAD(P)H-quinone oxidoreductase subunit I, chloroplastic (166 aa).

4Fe-4S ferredoxin-type domains are found at residues 55–84 (GRIH…VDWK) and 95–124 (LNYS…MTEE). [4Fe-4S] cluster is bound by residues Cys-64, Cys-67, Cys-70, Cys-74, Cys-104, Cys-107, Cys-110, and Cys-114.

The protein belongs to the complex I 23 kDa subunit family. In terms of assembly, NDH is composed of at least 16 different subunits, 5 of which are encoded in the nucleus. The cofactor is [4Fe-4S] cluster.

The protein resides in the plastid. The protein localises to the chloroplast thylakoid membrane. The catalysed reaction is a plastoquinone + NADH + (n+1) H(+)(in) = a plastoquinol + NAD(+) + n H(+)(out). The enzyme catalyses a plastoquinone + NADPH + (n+1) H(+)(in) = a plastoquinol + NADP(+) + n H(+)(out). Its function is as follows. NDH shuttles electrons from NAD(P)H:plastoquinone, via FMN and iron-sulfur (Fe-S) centers, to quinones in the photosynthetic chain and possibly in a chloroplast respiratory chain. The immediate electron acceptor for the enzyme in this species is believed to be plastoquinone. Couples the redox reaction to proton translocation, and thus conserves the redox energy in a proton gradient. This Oteiza scandens (Climbing oteiza) protein is NAD(P)H-quinone oxidoreductase subunit I, chloroplastic.